The primary structure comprises 197 residues: 3-isopropylmalate dehydratase small subunit (197 aa).

It belongs to the LeuD family. LeuD type 1 subfamily. In terms of assembly, heterodimer of LeuC and LeuD.

It catalyses the reaction (2R,3S)-3-isopropylmalate = (2S)-2-isopropylmalate. Its pathway is amino-acid biosynthesis; L-leucine biosynthesis; L-leucine from 3-methyl-2-oxobutanoate: step 2/4. Functionally, catalyzes the isomerization between 2-isopropylmalate and 3-isopropylmalate, via the formation of 2-isopropylmaleate. The polypeptide is 3-isopropylmalate dehydratase small subunit (Corynebacterium glutamicum (strain R)).